Here is a 318-residue protein sequence, read N- to C-terminus: NADH-ubiquinone oxidoreductase chain 1 (318 aa).

The next 8 membrane-spanning stretches (helical) occupy residues 2–22 (FMIN…FLTL), 68–88 (ITMF…MWTP), 100–120 (LGVL…LWSG), 146–166 (LAII…PALI), 171–191 (HMWL…STLA), 222–242 (LFFL…TILF), 253–273 (ELYT…FLWV), and 294–314 (LPLT…TAGI).

It belongs to the complex I subunit 1 family.

Its subcellular location is the mitochondrion inner membrane. It carries out the reaction a ubiquinone + NADH + 5 H(+)(in) = a ubiquinol + NAD(+) + 4 H(+)(out). In terms of biological role, core subunit of the mitochondrial membrane respiratory chain NADH dehydrogenase (Complex I) that is believed to belong to the minimal assembly required for catalysis. Complex I functions in the transfer of electrons from NADH to the respiratory chain. The immediate electron acceptor for the enzyme is believed to be ubiquinone. This Coelops frithii (East Asian tailless leaf-nosed bat) protein is NADH-ubiquinone oxidoreductase chain 1 (MT-ND1).